Reading from the N-terminus, the 365-residue chain is Chorismate synthase (365 aa).

Residues Arg-48 and Arg-54 each contribute to the NADP(+) site. FMN contacts are provided by residues 125 to 127, 237 to 238, Gly-277, 292 to 296, and Arg-318; these read RSS, NA, and KPTSS.

It belongs to the chorismate synthase family. Homotetramer. FMNH2 serves as cofactor.

The catalysed reaction is 5-O-(1-carboxyvinyl)-3-phosphoshikimate = chorismate + phosphate. It functions in the pathway metabolic intermediate biosynthesis; chorismate biosynthesis; chorismate from D-erythrose 4-phosphate and phosphoenolpyruvate: step 7/7. Catalyzes the anti-1,4-elimination of the C-3 phosphate and the C-6 proR hydrogen from 5-enolpyruvylshikimate-3-phosphate (EPSP) to yield chorismate, which is the branch point compound that serves as the starting substrate for the three terminal pathways of aromatic amino acid biosynthesis. This reaction introduces a second double bond into the aromatic ring system. In Verminephrobacter eiseniae (strain EF01-2), this protein is Chorismate synthase.